We begin with the raw amino-acid sequence, 106 residues long: Large ribosomal subunit protein uL24 (106 aa).

This sequence belongs to the universal ribosomal protein uL24 family. In terms of assembly, part of the 50S ribosomal subunit.

Functionally, one of two assembly initiator proteins, it binds directly to the 5'-end of the 23S rRNA, where it nucleates assembly of the 50S subunit. Its function is as follows. One of the proteins that surrounds the polypeptide exit tunnel on the outside of the subunit. The polypeptide is Large ribosomal subunit protein uL24 (Acidovorax sp. (strain JS42)).